Reading from the N-terminus, the 216-residue chain is Large ribosomal subunit protein uL1 (216 aa).

This sequence belongs to the universal ribosomal protein uL1 family. Component of the large ribosomal subunit.

The protein resides in the cytoplasm. In terms of biological role, component of the large ribosomal subunit. The ribosome is a large ribonucleoprotein complex responsible for the synthesis of proteins in the cell. The sequence is that of Large ribosomal subunit protein uL1 (rpl10a) from Ictalurus punctatus (Channel catfish).